The primary structure comprises 332 residues: Zinc finger protein CONSTANS-LIKE 13 (332 aa).

Zn(2+) is bound by residues Cys13, Cys16, Cys36, His41, Cys56, Cys59, Cys79, and His84. The B box-type 1; atypical zinc finger occupies 13 to 55 (CDYCDSSVALVYCKADSAKLCLACDKQVHVANQLFAKHFRSLL). The B box-type 2; atypical zinc finger occupies 56 to 96 (CDSCNESPSSLFCETERSVLCQNCDWQHHTASSSLHSRRPF). The CCT domain occupies 287 to 329 (RNSALSRYKEKKKSRRYEKHIRYESRKVRAESRTRIRGRFAKA).

Belongs to the CONSTANS family.

The protein resides in the nucleus. This chain is Zinc finger protein CONSTANS-LIKE 13 (COL13), found in Arabidopsis thaliana (Mouse-ear cress).